Consider the following 632-residue polypeptide: 1-deoxy-D-xylulose-5-phosphate synthase (632 aa).

Residues H74 and 115-117 (AHS) contribute to the thiamine diphosphate site. Position 146 (D146) interacts with Mg(2+). Thiamine diphosphate contacts are provided by residues 147-148 (GA), N176, Y283, and E365. Residue N176 participates in Mg(2+) binding.

This sequence belongs to the transketolase family. DXPS subfamily. Homodimer. The cofactor is Mg(2+). It depends on thiamine diphosphate as a cofactor.

The enzyme catalyses D-glyceraldehyde 3-phosphate + pyruvate + H(+) = 1-deoxy-D-xylulose 5-phosphate + CO2. It participates in metabolic intermediate biosynthesis; 1-deoxy-D-xylulose 5-phosphate biosynthesis; 1-deoxy-D-xylulose 5-phosphate from D-glyceraldehyde 3-phosphate and pyruvate: step 1/1. Catalyzes the acyloin condensation reaction between C atoms 2 and 3 of pyruvate and glyceraldehyde 3-phosphate to yield 1-deoxy-D-xylulose-5-phosphate (DXP). This is 1-deoxy-D-xylulose-5-phosphate synthase from Paraburkholderia phymatum (strain DSM 17167 / CIP 108236 / LMG 21445 / STM815) (Burkholderia phymatum).